Here is a 328-residue protein sequence, read N- to C-terminus: GMP reductase (328 aa).

Residue C176 is the Thioimidate intermediate of the active site. 205–228 (IIADGGIRTHGDIAKSIRFGASMI) is an NADP(+) binding site.

It belongs to the IMPDH/GMPR family. GuaC type 2 subfamily.

The enzyme catalyses IMP + NH4(+) + NADP(+) = GMP + NADPH + 2 H(+). Its function is as follows. Catalyzes the irreversible NADPH-dependent deamination of GMP to IMP. It functions in the conversion of nucleobase, nucleoside and nucleotide derivatives of G to A nucleotides, and in maintaining the intracellular balance of A and G nucleotides. This is GMP reductase from Streptococcus pneumoniae serotype 2 (strain D39 / NCTC 7466).